A 229-amino-acid chain; its full sequence is Prolactin (229 aa).

A signal peptide spans 1–30 (MDNKGWSLKGSLLFLLLLLSDLLLCKSVAS). Cys34 and Cys41 are oxidised to a cystine. The residue at position 56 (Ser56) is a Phosphoserine. An N-linked (GlcNAc...) asparagine glycan is attached at Asn61. 2 positions are modified to phosphoserine: Ser64 and Ser120. Intrachain disulfides connect Cys88-Cys204 and Cys221-Cys229.

It belongs to the somatotropin/prolactin family. As to quaternary structure, interacts with PRLR.

Its subcellular location is the secreted. Its function is as follows. Prolactin acts primarily on the mammary gland by promoting lactation. In Felis catus (Cat), this protein is Prolactin (PRL).